Reading from the N-terminus, the 417-residue chain is Glutamyl-tRNA(Gln) amidotransferase subunit D (417 aa).

One can recognise an Asparaginase/glutaminase domain in the interval 73–400 (EKVWLLATGG…EEVPRVLTTP (328 aa)). Residues threonine 83, threonine 157, aspartate 158, and lysine 236 contribute to the active site.

It belongs to the asparaginase 1 family. GatD subfamily. In terms of assembly, heterodimer of GatD and GatE.

It catalyses the reaction L-glutamyl-tRNA(Gln) + L-glutamine + ATP + H2O = L-glutaminyl-tRNA(Gln) + L-glutamate + ADP + phosphate + H(+). Functionally, allows the formation of correctly charged Gln-tRNA(Gln) through the transamidation of misacylated Glu-tRNA(Gln) in organisms which lack glutaminyl-tRNA synthetase. The reaction takes place in the presence of glutamine and ATP through an activated gamma-phospho-Glu-tRNA(Gln). The GatDE system is specific for glutamate and does not act on aspartate. The chain is Glutamyl-tRNA(Gln) amidotransferase subunit D from Pyrobaculum aerophilum (strain ATCC 51768 / DSM 7523 / JCM 9630 / CIP 104966 / NBRC 100827 / IM2).